The sequence spans 258 residues: Octanoyltransferase (258 aa).

The 185-residue stretch at 42–226 (NLGADTLLLL…AVVAALDGAL (185 aa)) folds into the BPL/LPL catalytic domain. Substrate contacts are provided by residues 80 to 87 (RGGKITWH), 156 to 158 (AIG), and 169 to 171 (GFS). Cys187 (acyl-thioester intermediate) is an active-site residue.

The protein belongs to the LipB family.

Its subcellular location is the cytoplasm. It carries out the reaction octanoyl-[ACP] + L-lysyl-[protein] = N(6)-octanoyl-L-lysyl-[protein] + holo-[ACP] + H(+). It functions in the pathway protein modification; protein lipoylation via endogenous pathway; protein N(6)-(lipoyl)lysine from octanoyl-[acyl-carrier-protein]: step 1/2. In terms of biological role, catalyzes the transfer of endogenously produced octanoic acid from octanoyl-acyl-carrier-protein onto the lipoyl domains of lipoate-dependent enzymes. Lipoyl-ACP can also act as a substrate although octanoyl-ACP is likely to be the physiological substrate. The protein is Octanoyltransferase of Rhodococcus opacus (strain B4).